The sequence spans 218 residues: CD99 antigen-like protein 2 (218 aa).

Positions 1–25 (MVAWRSAFLVCLAFSLATLVQRGSG) are cleaved as a signal peptide. The Extracellular segment spans residues 26–136 (DFDDFNLKDA…PGSGMVAETG (111 aa)). The tract at residues 72–128 (LADALDDRNDRDDGRRKPIAGGGGFSDKDLEDIVGGGEYKPDKGKGDGRYGSNDDPG) is disordered. Composition is skewed to basic and acidic residues over residues 76–87 (LDDRNDRDDGRR) and 110–119 (YKPDKGKGDG). S129 is a glycosylation site (O-linked (Xyl...) (chondroitin sulfate) serine). The chain crosses the membrane as a helical span at residues 137–157 (TIAGVASALAMALIGAVSSYI). Residues 158-218 (SYQQKKFCFS…EPPPSEPARI (61 aa)) are Cytoplasmic-facing.

This sequence belongs to the CD99 family. Post-translationally, O-glycosylated.

The protein localises to the cell membrane. The protein resides in the cell junction. It localises to the secreted. Its function is as follows. Plays a role in a late step of leukocyte extravasation helping cells to overcome the endothelial basement membrane. Acts at the same site as, but independently of, PECAM1. Homophilic adhesion molecule, but these interactions may not be required for cell aggregation. This Pongo abelii (Sumatran orangutan) protein is CD99 antigen-like protein 2 (CD99L2).